A 348-amino-acid polypeptide reads, in one-letter code: MTAQPQVLTIRRPDDWHVHLRDGDMLKTVVPYTSETYGRAIVMPNLAPPVTTVEAAIAYRQRILDAVPEHHAFEPLMTCYLTDTLDADELERGFQQGVFTAAKLYPANATTNSSHGVTSVDNIMTVLERMEKLGMPLLVHGEVTHSEVDIFDREARFIETVMEPLRKRLQGLKVVFEHITTKDAADYVREGNSLLGATITPQHLMFNRNHMLAGGIRPHLYCLPILKRNVHQQALRELVASGCERVFLGTDSAPHARHRKETSCGCAGCFNAPSALGAYATVFEEMNALAHFEAFASLNGPGFYGLPVNEGTVTLVREESVMPETIAIADDTLVPFLAGEAVRWTVKR.

2 residues coordinate Zn(2+): histidine 17 and histidine 19. Residues 19 to 21 (HLR) and asparagine 45 each bind substrate. Zn(2+)-binding residues include lysine 103, histidine 140, and histidine 178. Lysine 103 carries the N6-carboxylysine modification. Histidine 140 is a binding site for substrate. Leucine 223 contacts substrate. A Zn(2+)-binding site is contributed by aspartate 251. The active site involves aspartate 251. Histidine 255 and alanine 267 together coordinate substrate.

It belongs to the metallo-dependent hydrolases superfamily. DHOase family. Class II DHOase subfamily. As to quaternary structure, homodimer. Zn(2+) serves as cofactor.

It catalyses the reaction (S)-dihydroorotate + H2O = N-carbamoyl-L-aspartate + H(+). It functions in the pathway pyrimidine metabolism; UMP biosynthesis via de novo pathway; (S)-dihydroorotate from bicarbonate: step 3/3. Functionally, catalyzes the reversible cyclization of carbamoyl aspartate to dihydroorotate. This is Dihydroorotase from Cronobacter sakazakii (strain ATCC BAA-894) (Enterobacter sakazakii).